Here is a 252-residue protein sequence, read N- to C-terminus: UPF0736 protein OB1207 (252 aa).

This sequence belongs to the UPF0736 family.

The protein is UPF0736 protein OB1207 of Oceanobacillus iheyensis (strain DSM 14371 / CIP 107618 / JCM 11309 / KCTC 3954 / HTE831).